The primary structure comprises 217 residues: GTP cyclohydrolase 1 (217 aa).

Positions 109, 112, and 180 each coordinate Zn(2+).

Belongs to the GTP cyclohydrolase I family. Toroid-shaped homodecamer, composed of two pentamers of five dimers.

The catalysed reaction is GTP + H2O = 7,8-dihydroneopterin 3'-triphosphate + formate + H(+). The protein operates within cofactor biosynthesis; 7,8-dihydroneopterin triphosphate biosynthesis; 7,8-dihydroneopterin triphosphate from GTP: step 1/1. This is GTP cyclohydrolase 1 from Photobacterium profundum (strain SS9).